We begin with the raw amino-acid sequence, 180 residues long: Large ribosomal subunit protein uL5 (180 aa).

Belongs to the universal ribosomal protein uL5 family. Part of the 50S ribosomal subunit; part of the 5S rRNA/L5/L18/L25 subcomplex. Contacts the 5S rRNA and the P site tRNA. Forms a bridge to the 30S subunit in the 70S ribosome.

In terms of biological role, this is one of the proteins that bind and probably mediate the attachment of the 5S RNA into the large ribosomal subunit, where it forms part of the central protuberance. In the 70S ribosome it contacts protein S13 of the 30S subunit (bridge B1b), connecting the 2 subunits; this bridge is implicated in subunit movement. Contacts the P site tRNA; the 5S rRNA and some of its associated proteins might help stabilize positioning of ribosome-bound tRNAs. In Acholeplasma laidlawii (strain PG-8A), this protein is Large ribosomal subunit protein uL5.